Consider the following 447-residue polypeptide: Na(+)-translocating NADH-quinone reductase subunit A (447 aa).

This sequence belongs to the NqrA family. In terms of assembly, composed of six subunits; NqrA, NqrB, NqrC, NqrD, NqrE and NqrF.

It catalyses the reaction a ubiquinone + n Na(+)(in) + NADH + H(+) = a ubiquinol + n Na(+)(out) + NAD(+). Its function is as follows. NQR complex catalyzes the reduction of ubiquinone-1 to ubiquinol by two successive reactions, coupled with the transport of Na(+) ions from the cytoplasm to the periplasm. NqrA to NqrE are probably involved in the second step, the conversion of ubisemiquinone to ubiquinol. The chain is Na(+)-translocating NADH-quinone reductase subunit A from Yersinia pestis bv. Antiqua (strain Angola).